Consider the following 301-residue polypeptide: NADH-cytochrome b5 reductase 2 (301 aa).

A helical membrane pass occupies residues 14-30 (FLVPFAGATALSIGLAL). The FAD-binding FR-type domain occupies 51–155 (NEWVDLKLSK…KGPIVKWKWE (105 aa)). Residue 158–193 (QFKSIALIGGGTGITPLYQLLHQITSNPKDNTKVNL) coordinates FAD.

Belongs to the flavoprotein pyridine nucleotide cytochrome reductase family. FAD is required as a cofactor.

It localises to the mitochondrion outer membrane. The catalysed reaction is 2 Fe(III)-[cytochrome b5] + NADH = 2 Fe(II)-[cytochrome b5] + NAD(+) + H(+). In terms of biological role, may mediate the reduction of outer membrane cytochrome b5. The sequence is that of NADH-cytochrome b5 reductase 2 (MCR1) from Candida albicans (strain SC5314 / ATCC MYA-2876) (Yeast).